Consider the following 55-residue polypeptide: Large ribosomal subunit protein bL33A (55 aa).

The protein belongs to the bacterial ribosomal protein bL33 family.

This is Large ribosomal subunit protein bL33A from Mycobacterium sp. (strain JLS).